A 477-amino-acid polypeptide reads, in one-letter code: ATP synthase subunit beta (477 aa).

ATP is bound at residue 151–158; that stretch reads GGAGVGKT.

The protein belongs to the ATPase alpha/beta chains family. As to quaternary structure, F-type ATPases have 2 components, CF(1) - the catalytic core - and CF(0) - the membrane proton channel. CF(1) has five subunits: alpha(3), beta(3), gamma(1), delta(1), epsilon(1). CF(0) has three main subunits: a(1), b(2) and c(9-12). The alpha and beta chains form an alternating ring which encloses part of the gamma chain. CF(1) is attached to CF(0) by a central stalk formed by the gamma and epsilon chains, while a peripheral stalk is formed by the delta and b chains.

Its subcellular location is the cell inner membrane. It carries out the reaction ATP + H2O + 4 H(+)(in) = ADP + phosphate + 5 H(+)(out). Its function is as follows. Produces ATP from ADP in the presence of a proton gradient across the membrane. The catalytic sites are hosted primarily by the beta subunits. The protein is ATP synthase subunit beta of Bradyrhizobium diazoefficiens (strain JCM 10833 / BCRC 13528 / IAM 13628 / NBRC 14792 / USDA 110).